Reading from the N-terminus, the 154-residue chain is Superoxide dismutase [Cu-Zn] (154 aa).

Histidine 47, histidine 49, and histidine 64 together coordinate Cu cation. Cysteine 58 and cysteine 147 form a disulfide bridge. Zn(2+) is bound by residues histidine 64, histidine 72, histidine 81, and aspartate 84. Histidine 121 is a binding site for Cu cation. Positions 125 to 137 (DDLGRSEHPESKK) are enriched in basic and acidic residues. The disordered stretch occupies residues 125–144 (DDLGRSEHPESKKTGNAGAR). Arginine 144 provides a ligand contact to substrate.

This sequence belongs to the Cu-Zn superoxide dismutase family. In terms of assembly, homodimer. Cu cation is required as a cofactor. Zn(2+) serves as cofactor.

The protein localises to the cytoplasm. It carries out the reaction 2 superoxide + 2 H(+) = H2O2 + O2. In terms of biological role, destroys radicals which are normally produced within the cells and which are toxic to biological systems. In Aspergillus oryzae (strain ATCC 42149 / RIB 40) (Yellow koji mold), this protein is Superoxide dismutase [Cu-Zn] (sodC).